Reading from the N-terminus, the 41-residue chain is Large ribosomal subunit protein bL36 (41 aa).

It belongs to the bacterial ribosomal protein bL36 family.

This chain is Large ribosomal subunit protein bL36, found in Paracoccus denitrificans (strain Pd 1222).